The sequence spans 21 residues: Cardiotoxin-like basic polypeptide ah (21 aa).

This sequence belongs to the three-finger toxin family. Short-chain subfamily. Orphan group XV sub-subfamily. In terms of processing, contains 4 disulfide bonds. Expressed by the venom gland.

The protein resides in the secreted. It localises to the target cell membrane. Its function is as follows. Has hemolytic activity under low-lecithin conditions. Has low cytotoxic activity. Inhibits the expression of VEGF and bFGF in human non-small-cell lung cancer cell line NCI-H1299 in a dose-dependent manner. The sequence is that of Cardiotoxin-like basic polypeptide ah from Naja atra (Chinese cobra).